We begin with the raw amino-acid sequence, 157 residues long: MNFPDTPVCEMPFFRGDLRDSNHCAFSKSTCIYLLFEPLRYSCIRLIVMFICVAMITCPNSLRFSQYTFLRSYLTLPSCAYFDFLGTHTSRLKLTPVHIPILVLQRKNNRAYPSDMIYDTCTLDFLFRNLCLHKSCSYVWGQIQSSRRFYRKIDHLA.

The chain crosses the membrane as a helical span at residues 42–64 (SCIRLIVMFICVAMITCPNSLRF).

It is found in the membrane. This is an uncharacterized protein from Saccharomyces cerevisiae (strain ATCC 204508 / S288c) (Baker's yeast).